The primary structure comprises 155 residues: SsrA-binding protein (155 aa).

Belongs to the SmpB family.

The protein localises to the cytoplasm. Functionally, required for rescue of stalled ribosomes mediated by trans-translation. Binds to transfer-messenger RNA (tmRNA), required for stable association of tmRNA with ribosomes. tmRNA and SmpB together mimic tRNA shape, replacing the anticodon stem-loop with SmpB. tmRNA is encoded by the ssrA gene; the 2 termini fold to resemble tRNA(Ala) and it encodes a 'tag peptide', a short internal open reading frame. During trans-translation Ala-aminoacylated tmRNA acts like a tRNA, entering the A-site of stalled ribosomes, displacing the stalled mRNA. The ribosome then switches to translate the ORF on the tmRNA; the nascent peptide is terminated with the 'tag peptide' encoded by the tmRNA and targeted for degradation. The ribosome is freed to recommence translation, which seems to be the essential function of trans-translation. This is SsrA-binding protein from Bacillus cereus (strain G9842).